The chain runs to 379 residues: UPF0754 membrane protein ABC1518 (379 aa).

Transmembrane regions (helical) follow at residues 1 to 21 (MHWI…GAAT) and 358 to 378 (LLGG…VHFF).

This sequence belongs to the UPF0754 family.

Its subcellular location is the cell membrane. This is UPF0754 membrane protein ABC1518 from Shouchella clausii (strain KSM-K16) (Alkalihalobacillus clausii).